The sequence spans 253 residues: Succinate dehydrogenase iron-sulfur subunit (253 aa).

Residues C64, C69, and C84 each coordinate [2Fe-2S] cluster. One can recognise a 4Fe-4S ferredoxin-type domain in the interval R146–F174. Residues C155, C158, and C161 each coordinate [4Fe-4S] cluster. [3Fe-4S] cluster contacts are provided by C165, C212, and C218. A [4Fe-4S] cluster-binding site is contributed by C222.

This sequence belongs to the succinate dehydrogenase/fumarate reductase iron-sulfur protein family. In terms of assembly, in B.subtilis succinate dehydrogenase forms part of an enzyme complex containing three subunits: a flavoprotein, an iron-sulfur protein and cytochrome b-558. [2Fe-2S] cluster is required as a cofactor. [3Fe-4S] cluster serves as cofactor. The cofactor is [4Fe-4S] cluster.

The catalysed reaction is a quinone + succinate = fumarate + a quinol. It functions in the pathway carbohydrate metabolism; tricarboxylic acid cycle; fumarate from succinate (bacterial route): step 1/1. This Bacillus subtilis (strain 168) protein is Succinate dehydrogenase iron-sulfur subunit (sdhB).